A 162-amino-acid chain; its full sequence is Cyclic pyranopterin monophosphate synthase (162 aa).

Substrate-binding positions include 75-77 and 113-114; these read LCH and ME. D128 is an active-site residue.

Belongs to the MoaC family. As to quaternary structure, homohexamer; trimer of dimers.

It catalyses the reaction (8S)-3',8-cyclo-7,8-dihydroguanosine 5'-triphosphate = cyclic pyranopterin phosphate + diphosphate. Its pathway is cofactor biosynthesis; molybdopterin biosynthesis. Its function is as follows. Catalyzes the conversion of (8S)-3',8-cyclo-7,8-dihydroguanosine 5'-triphosphate to cyclic pyranopterin monophosphate (cPMP). The protein is Cyclic pyranopterin monophosphate synthase of Burkholderia cenocepacia (strain HI2424).